A 339-amino-acid chain; its full sequence is Small ribosomal subunit biogenesis GTPase RsgA (339 aa).

Residues Met111 to Phe271 form the CP-type G domain. Residues Asn159–Asp162 and Gly213–Ser221 each bind GTP. Zn(2+) is bound by residues Cys295, Cys300, His302, and Cys308.

The protein belongs to the TRAFAC class YlqF/YawG GTPase family. RsgA subfamily. As to quaternary structure, monomer. Associates with 30S ribosomal subunit, binds 16S rRNA. It depends on Zn(2+) as a cofactor.

It localises to the cytoplasm. Functionally, one of several proteins that assist in the late maturation steps of the functional core of the 30S ribosomal subunit. Helps release RbfA from mature subunits. May play a role in the assembly of ribosomal proteins into the subunit. Circularly permuted GTPase that catalyzes slow GTP hydrolysis, GTPase activity is stimulated by the 30S ribosomal subunit. This is Small ribosomal subunit biogenesis GTPase RsgA from Pseudomonas aeruginosa (strain ATCC 15692 / DSM 22644 / CIP 104116 / JCM 14847 / LMG 12228 / 1C / PRS 101 / PAO1).